The following is a 1397-amino-acid chain: Probable cyclin-dependent serine/threonine-protein kinase DDB_G0292550 (1397 aa).

The Protein kinase domain maps to 4 to 287 (FQIIELIGSG…TKEALNHPWF (284 aa)). Residues 10 to 18 (IGSGSYGKV) and lysine 33 contribute to the ATP site. The Proton acceptor role is filled by aspartate 124. 8 disordered regions span residues 412 to 567 (NNNN…NNNN), 671 to 728 (PLSI…NNGF), 763 to 831 (NEMG…NGNN), 845 to 949 (NNNN…YANH), 996 to 1101 (NGLA…NTHN), 1115 to 1174 (NNGF…NSPV), 1227 to 1324 (NSAS…SFGL), and 1340 to 1397 (KKKK…IVLD). A compositionally biased stretch (low complexity) spans 676-715 (SQHHNTSSSDTHNNNNNNYNNNNNNNNNINNNNINSIHNQ). Low complexity-rich tracts occupy residues 845 to 941 (NNNN…NGNG), 1012 to 1021 (NSNNNNSGNN), 1028 to 1101 (NTFN…NTHN), and 1115 to 1155 (NNGF…TKNN). Polar residues predominate over residues 1156 to 1171 (TQFGPNILSSTQTSHN). Low complexity-rich tracts occupy residues 1253–1321 (NNNN…NNNS) and 1354–1380 (SSSQ…SQTQ).

It belongs to the protein kinase superfamily. CMGC Ser/Thr protein kinase family. CDC2/CDKX subfamily.

It carries out the reaction L-seryl-[protein] + ATP = O-phospho-L-seryl-[protein] + ADP + H(+). The enzyme catalyses L-threonyl-[protein] + ATP = O-phospho-L-threonyl-[protein] + ADP + H(+). The chain is Probable cyclin-dependent serine/threonine-protein kinase DDB_G0292550 from Dictyostelium discoideum (Social amoeba).